Consider the following 180-residue polypeptide: Large ribosomal subunit protein uL5 (180 aa).

This sequence belongs to the universal ribosomal protein uL5 family. As to quaternary structure, part of the 50S ribosomal subunit; part of the 5S rRNA/L5/L18/L25 subcomplex. Contacts the 5S rRNA and the P site tRNA. Forms a bridge to the 30S subunit in the 70S ribosome.

This is one of the proteins that bind and probably mediate the attachment of the 5S RNA into the large ribosomal subunit, where it forms part of the central protuberance. In the 70S ribosome it contacts protein S13 of the 30S subunit (bridge B1b), connecting the 2 subunits; this bridge is implicated in subunit movement. Contacts the P site tRNA; the 5S rRNA and some of its associated proteins might help stabilize positioning of ribosome-bound tRNAs. This is Large ribosomal subunit protein uL5 from Xanthomonas oryzae pv. oryzae (strain MAFF 311018).